The following is a 78-amino-acid chain: Large ribosomal subunit protein uL29 (78 aa).

It belongs to the universal ribosomal protein uL29 family.

The sequence is that of Large ribosomal subunit protein uL29 from Rhodococcus opacus (strain B4).